We begin with the raw amino-acid sequence, 1043 residues long: Isoleucine--tRNA ligase (1043 aa).

A 'HIGH' region motif is present at residues 49 to 59 (PFATGLPHYGH). A 'KMSKS' region motif is present at residues 592 to 596 (KMSKR). An ATP-binding site is contributed by lysine 595.

This sequence belongs to the class-I aminoacyl-tRNA synthetase family. IleS type 2 subfamily. In terms of assembly, monomer. Requires Zn(2+) as cofactor.

Its subcellular location is the cytoplasm. It carries out the reaction tRNA(Ile) + L-isoleucine + ATP = L-isoleucyl-tRNA(Ile) + AMP + diphosphate. Functionally, catalyzes the attachment of isoleucine to tRNA(Ile). As IleRS can inadvertently accommodate and process structurally similar amino acids such as valine, to avoid such errors it has two additional distinct tRNA(Ile)-dependent editing activities. One activity is designated as 'pretransfer' editing and involves the hydrolysis of activated Val-AMP. The other activity is designated 'posttransfer' editing and involves deacylation of mischarged Val-tRNA(Ile). The chain is Isoleucine--tRNA ligase from Chlamydia caviae (strain ATCC VR-813 / DSM 19441 / 03DC25 / GPIC) (Chlamydophila caviae).